The primary structure comprises 803 residues: Isoamylase 1, chloroplastic (803 aa).

Residues 1–54 (MASLPHCLSARPLVVAAAPGRPGPGPGPWLRGGARRRNAAFSAGNAGRRVGLRR) constitute a chloroplast transit peptide. The active-site Nucleophile is the D432. E488 serves as the catalytic Proton donor.

It belongs to the glycosyl hydrolase 13 family. In terms of assembly, forms a homo-pentamer and a hetero-hexamer composed of five ISA1 and one ISA2. Interacts with FLO6/SIP4. As to expression, highly expressed in developing endosperm. Expressed at low levels in leaves.

The protein localises to the plastid. It is found in the chloroplast. It catalyses the reaction Hydrolysis of (1-&gt;6)-alpha-D-glucosidic branch linkages in glycogen, amylopectin and their beta-limit dextrins.. The protein operates within glycan biosynthesis; starch biosynthesis. With respect to regulation, inhibited by copper chloride, mercury chloride, ammonium molybdate and para-chloromercuribenzoate. Starch-debranching enzyme involved in amylopectin biosynthesis in endosperm. Functions by removing excess branches or improper branches that interfere with the formation of double helices of the cluster chains of amylopectin and crystallization of starch. Works as ISA1 homooligomer or together with ISA2 as heterooligomer. The heterooligomer ISA1 and ISA2 possesses higher affinity than the ISA1 homooligomer for various branched polyglucans in vitro, but no marked differences exist in chain preferences for debranching of amylopectin and phytoglycogen between these forms. The protein is Isoamylase 1, chloroplastic of Oryza sativa subsp. japonica (Rice).